Here is a 548-residue protein sequence, read N- to C-terminus: BTB/POZ domain-containing protein At5g17580 (548 aa).

Residues 7–74 (SDLHINVKGV…CNGSEFKFTS (68 aa)) enclose the BTB domain. The NPH3 domain maps to 180–442 (DWKSEDLITI…VNVLCVSQLQ (263 aa)). Tyr383 is subject to Phosphotyrosine. Residues 442 to 493 (QIRDTVAKEIKGMEEKVDEEEEEEIEVSSDEDEMEKMSNKLLGLEIENDECV) are a coiled coil.

This sequence belongs to the NPH3 family.

The protein operates within protein modification; protein ubiquitination. Its function is as follows. May act as a substrate-specific adapter of an E3 ubiquitin-protein ligase complex (CUL3-RBX1-BTB) which mediates the ubiquitination and subsequent proteasomal degradation of target proteins. In Arabidopsis thaliana (Mouse-ear cress), this protein is BTB/POZ domain-containing protein At5g17580.